Here is a 232-residue protein sequence, read N- to C-terminus: Ribonuclease 3 (232 aa).

The region spanning 5-134 (NDAISKIIDY…LIGAIYIDGG (130 aa)) is the RNase III domain. E47 contacts Mg(2+). D51 is an active-site residue. Residues N120 and E123 each coordinate Mg(2+). Residue E123 is part of the active site. Residues 159-228 (DPKTSLQEWT…AELMLEKIGK (70 aa)) form the DRBM domain.

This sequence belongs to the ribonuclease III family. Homodimer. Requires Mg(2+) as cofactor.

The protein localises to the cytoplasm. It catalyses the reaction Endonucleolytic cleavage to 5'-phosphomonoester.. Its function is as follows. Digests double-stranded RNA. Involved in the processing of primary rRNA transcript to yield the immediate precursors to the large and small rRNAs (23S and 16S). Processes some mRNAs, and tRNAs when they are encoded in the rRNA operon. Processes pre-crRNA and tracrRNA of type II CRISPR loci if present in the organism. In Wolbachia pipientis wMel, this protein is Ribonuclease 3.